The primary structure comprises 299 residues: MIDVGLRIDVDTFRGTRDGVPRLLQTLDRHQIKASFFFSVGPDNMGRHLWRLLKPRFLLKMLRSNAASLYGLDILLAGTAWPGKSIGKQLGSLMRDTDSARHEVGLHAWDHHGWQANTGRWDEATLIHQTRLGVDALNQILRREVDCSAAAGWRADPLTTQAKEAFGFRYNSDCRGSGLFRPLLQDGRPGTPQIPVNLPTFDEVVGTEVTTAQFNAFMLDRLCTPPQVAPHVYTIHAEVEGIVMADQFDALLAEASARGIRFVPLGSLLPPDPAQLDAGRLVRGTLPGREGWLGCKADV.

One can recognise a NodB homology domain in the interval 2 to 263 (IDVGLRIDVD…EASARGIRFV (262 aa)).

This sequence belongs to the polysaccharide deacetylase family. ArnD deformylase subfamily.

The enzyme catalyses 4-deoxy-4-formamido-alpha-L-arabinopyranosyl di-trans,octa-cis-undecaprenyl phosphate + H2O = 4-amino-4-deoxy-alpha-L-arabinopyranosyl di-trans,octa-cis-undecaprenyl phosphate + formate. It functions in the pathway glycolipid biosynthesis; 4-amino-4-deoxy-alpha-L-arabinose undecaprenyl phosphate biosynthesis; 4-amino-4-deoxy-alpha-L-arabinose undecaprenyl phosphate from UDP-4-deoxy-4-formamido-beta-L-arabinose and undecaprenyl phosphate: step 2/2. Its pathway is bacterial outer membrane biogenesis; lipopolysaccharide biosynthesis. Its function is as follows. Catalyzes the deformylation of 4-deoxy-4-formamido-L-arabinose-phosphoundecaprenol to 4-amino-4-deoxy-L-arabinose-phosphoundecaprenol. The modified arabinose is attached to lipid A and is required for resistance to polymyxin and cationic antimicrobial peptides. This Aeromonas salmonicida (strain A449) protein is Probable 4-deoxy-4-formamido-L-arabinose-phosphoundecaprenol deformylase ArnD.